Consider the following 460-residue polypeptide: UDP-N-acetylmuramoylalanine--D-glutamate ligase (460 aa).

120–126 (GSNGKTT) contributes to the ATP binding site.

This sequence belongs to the MurCDEF family.

It localises to the cytoplasm. It catalyses the reaction UDP-N-acetyl-alpha-D-muramoyl-L-alanine + D-glutamate + ATP = UDP-N-acetyl-alpha-D-muramoyl-L-alanyl-D-glutamate + ADP + phosphate + H(+). It functions in the pathway cell wall biogenesis; peptidoglycan biosynthesis. Cell wall formation. Catalyzes the addition of glutamate to the nucleotide precursor UDP-N-acetylmuramoyl-L-alanine (UMA). The polypeptide is UDP-N-acetylmuramoylalanine--D-glutamate ligase (Lactobacillus gasseri (strain ATCC 33323 / DSM 20243 / BCRC 14619 / CIP 102991 / JCM 1131 / KCTC 3163 / NCIMB 11718 / NCTC 13722 / AM63)).